The chain runs to 87 residues: MVDEITNETAQTVAAGQLRAFIERIERLEEEKQTISDDIKDVYAEMKGNGFDVKAVRAIVRLRKKDQAERQEEEAILDLYKAALGMV.

It belongs to the UPF0335 family.

This is UPF0335 protein Meso_3367 from Chelativorans sp. (strain BNC1).